Reading from the N-terminus, the 760-residue chain is MOXD1 homolog 2 (760 aa).

The disordered stretch occupies residues 1 to 34 (MAHPRKAVATPATLQLGPPAQTAQSPAATLRHSR). Residues 18–34 (PPAQTAQSPAATLRHSR) are compositionally biased toward low complexity. Residues 47 to 67 (CFISCHTFNLFLLLLLLASGV) traverse the membrane as a helical segment. Residues Asn-78, Asn-198, and Asn-223 are each glycosylated (N-linked (GlcNAc...) asparagine). The 117-residue stretch at 117-233 (DDFRILWQII…DTMRLLYMYH (117 aa)) folds into the DOMON domain. 3 disulfide bridges follow: Cys-339-Cys-367, Cys-467-Cys-581, and Cys-543-Cys-565. Asn-668 is a glycosylation site (N-linked (GlcNAc...) asparagine). Residues 678–701 (RCKPKRPLAPPTERTAPPPASDLS) are disordered. Residues 740–760 (FISCLLWLGASSWWLLLMLRT) form a helical membrane-spanning segment.

Belongs to the copper type II ascorbate-dependent monooxygenase family.

The protein localises to the membrane. In Drosophila melanogaster (Fruit fly), this protein is MOXD1 homolog 2 (olf413).